Here is a 314-residue protein sequence, read N- to C-terminus: Phosphoribosylaminoimidazole-succinocarboxamide synthase (314 aa).

The protein belongs to the SAICAR synthetase family.

It carries out the reaction 5-amino-1-(5-phospho-D-ribosyl)imidazole-4-carboxylate + L-aspartate + ATP = (2S)-2-[5-amino-1-(5-phospho-beta-D-ribosyl)imidazole-4-carboxamido]succinate + ADP + phosphate + 2 H(+). Its pathway is purine metabolism; IMP biosynthesis via de novo pathway; 5-amino-1-(5-phospho-D-ribosyl)imidazole-4-carboxamide from 5-amino-1-(5-phospho-D-ribosyl)imidazole-4-carboxylate: step 1/2. The chain is Phosphoribosylaminoimidazole-succinocarboxamide synthase from Bacteroides fragilis (strain ATCC 25285 / DSM 2151 / CCUG 4856 / JCM 11019 / LMG 10263 / NCTC 9343 / Onslow / VPI 2553 / EN-2).